Reading from the N-terminus, the 249-residue chain is Vacuolar iron transporter 1 (249 aa).

The Cytoplasmic segment spans residues 1–36 (MADGANDGGNPGAEEQQRLLDQHKEAHFTAGEIVRD). The chain crosses the membrane as a helical span at residues 37–57 (IIIGVSDGLTVPFALAAGLSG). Residues 58–63 (ANASSS) are Vacuolar-facing. The helical transmembrane segment at 64–84 (IVLTAGIAEVAAGAISMGLGG) threads the bilayer. Topologically, residues 85–170 (YLAAKSEADN…PKRALQSAFT (86 aa)) are cytoplasmic. Positions 90 to 165 (SEADNYAREL…LEKPDPKRAL (76 aa)) are cytoplasmic metal binding domain (MBD). 6 residues coordinate Fe cation: glutamate 102, glutamate 105, glutamate 113, glutamate 116, methionine 149, and glutamate 153. The chain crosses the membrane as a helical span at residues 171–191 (IAIAYVLGGLVPLIPYMFIPV). Residues 192 to 194 (ARK) are Vacuolar-facing. Residues 195 to 215 (AVVASVILTLMALLIFGYAKG) traverse the membrane as a helical segment. At 216 to 226 (YFTDNKPFKSA) the chain is on the cytoplasmic side. A helical transmembrane segment spans residues 227–247 (LQTALIGAIASAAAFGMAKAV). Topologically, residues 248–249 (QS) are vacuolar.

It belongs to the CCC1 family. In terms of assembly, homodimer. The dimeric interaction is mediated by both the transmembrane domains (TMDs) and the cytoplasmic metal binding domain (MBD).

The protein resides in the vacuole membrane. It catalyses the reaction Fe(2+)(in) = Fe(2+)(out). Its activity is regulated as follows. Transport of iron ions is inhibited by zinc ions. Functionally, vacuolar iron transporter involved in the transfer of iron ions from the cytosol to the vacuole for intracellular iron storage. Can transport cobalt ions from the cytosol to the vacuole. The protein is Vacuolar iron transporter 1 of Eucalyptus grandis (Flooded gum).